The primary structure comprises 782 residues: LPS-assembly protein LptD (782 aa).

The N-terminal stretch at 1–24 (MKKNSYTRLSIAILSTLYSVSSLA) is a signal peptide.

Belongs to the LptD family. As to quaternary structure, component of the lipopolysaccharide transport and assembly complex. Interacts with LptE and LptA.

It is found in the cell outer membrane. Together with LptE, is involved in the assembly of lipopolysaccharide (LPS) at the surface of the outer membrane. This Pasteurella multocida (strain Pm70) protein is LPS-assembly protein LptD.